The sequence spans 316 residues: Polyprenyl transferase dpchC (316 aa).

The next 8 membrane-spanning stretches (helical) occupy residues 24-44 (PLFTTFAGLWSTLLAGGAKMA), 60-80 (ALCFVASYLFCGAGMVWNDWI), 105-125 (EAMVWMVLQAALSWGVLEVML), 154-174 (MLGIYPQYILAFTIAWPAVIG), 192-212 (CLPLCTMVFFWTIYLNTAYSY), 234-254 (IHLLLVALVSPILVCLPIYLF), 258-278 (SLWLWLSWMGVWTASLAQQLV), and 296-316 (FILGIWTILACVVQVFLTGSA).

The protein belongs to the UbiA prenyltransferase family. Requires Mg(2+) as cofactor.

It is found in the membrane. It participates in secondary metabolite biosynthesis; terpenoid biosynthesis. Polyprenyl transferase; part of the gene cluster that mediates the biosynthesis of the diterpenoid pyrones higginsianins A and B. The first step of the pathway is the synthesis of the alpha-pyrone moiety by the polyketide synthase dpchA via condensation of one acetyl-CoA starter unit with 3 malonyl-CoA units and 2 methylations. The alpha-pyrone is then combined with geranylgeranyl pyrophosphate (GGPP) formed by the GGPP synthase dpchD through the action of the prenyltransferase dpchC to yield a linear alpha-pyrone diterpenoid. Subsequent steps in the diterpenoid pyrone biosynthetic pathway involve the decalin core formation, which is initiated by the epoxidation of the C10-C11 olefin by the FAD-dependent oxidoreductase dpchE, and is followed by a cyclization cascade catalyzed by the terpene cyclase dpchB. The short chain dehydrogenase/reductase dpchG then oxidizes the 8S hydroxy group to a ketone and the short chain dehydrogenase/reductase dpchH reduces the ketone to the 8R hydroxy group to yield higginsianin B. Finally, the FAD-dependent oxidoreductase dpchF converts higginsianin B into higginsianin A. This chain is Polyprenyl transferase dpchC, found in Colletotrichum higginsianum (strain IMI 349063) (Crucifer anthracnose fungus).